Consider the following 422-residue polypeptide: L-2-hydroxyglutarate dehydrogenase (422 aa).

It belongs to the L2HGDH family. The cofactor is FAD.

It is found in the cell inner membrane. It catalyses the reaction (S)-2-hydroxyglutarate + a quinone = a quinol + 2-oxoglutarate. It functions in the pathway amino-acid degradation. Catalyzes the dehydrogenation of L-2-hydroxyglutarate (L2HG) to alpha-ketoglutarate and couples to the respiratory chain by feeding electrons from the reaction into the membrane quinone pool. Functions in a L-lysine degradation pathway that proceeds via cadaverine, glutarate and L-2-hydroxyglutarate. The polypeptide is L-2-hydroxyglutarate dehydrogenase (Escherichia coli (strain K12)).